A 142-amino-acid chain; its full sequence is MNTIKQSFSTSKLEGYTKQLPSPAPGICLPAGKVVPHTTFEVIEKYNVLDDIIKPLSNQPIFEGPSGVKWFDIKEKENEHREYRIYFIKENSIYSFDTKSKQTRSSQVDARLFSVMVTSKPLFIADIGIGVGMPQMKKILKM.

A Sema domain is found at 1–142 (MNTIKQSFST…MPQMKKILKM (142 aa)).

The protein belongs to the semaphorin family.

This is Semaphorin-like protein VACWR164 from Bos taurus (Bovine).